The chain runs to 402 residues: Secreted RxLR effector protein 73 (402 aa).

The first 23 residues, 1–23 (MRLLHVVVATVSLTGAITSLIAA), serve as a signal peptide directing secretion. N-linked (GlcNAc...) asparagine glycosylation occurs at N27. The RxLR motif lies at 104–107 (RVLR). N-linked (GlcNAc...) asparagine glycans are attached at residues N111, N134, N143, N165, and N286.

Belongs to the RxLR effector family.

Its subcellular location is the secreted. It is found in the host cell. Functionally, secreted effector that completely suppresses the host cell death induced by cell death-inducing proteins. The sequence is that of Secreted RxLR effector protein 73 from Plasmopara viticola (Downy mildew of grapevine).